The sequence spans 428 residues: Dihydroorotase (428 aa).

Zn(2+)-binding residues include histidine 59 and histidine 61. Residues 61 to 63 (HLR) and asparagine 93 contribute to the substrate site. Aspartate 151, histidine 178, and histidine 231 together coordinate Zn(2+). Asparagine 277 provides a ligand contact to substrate. Residue aspartate 304 coordinates Zn(2+). Residue aspartate 304 is part of the active site. Residues histidine 308 and 322–323 (FG) contribute to the substrate site.

Belongs to the metallo-dependent hydrolases superfamily. DHOase family. Class I DHOase subfamily. The cofactor is Zn(2+).

It catalyses the reaction (S)-dihydroorotate + H2O = N-carbamoyl-L-aspartate + H(+). The protein operates within pyrimidine metabolism; UMP biosynthesis via de novo pathway; (S)-dihydroorotate from bicarbonate: step 3/3. Functionally, catalyzes the reversible cyclization of carbamoyl aspartate to dihydroorotate. This Bacillus cereus (strain B4264) protein is Dihydroorotase.